Reading from the N-terminus, the 234-residue chain is Fibroblast growth factor-binding protein 1 (234 aa).

Residues 1-23 (MRTHGLTLLSLLLLAVPMLLVEA) form the signal peptide. The tract at residues 25 to 59 (KEGRNRRGSKASADESLALGKPGKEPRSQPTNYPI) is disordered. 3 disulfide bridges follow: C71–C88, C97–C130, and C106–C142. N155 is a glycosylation site (N-linked (GlcNAc...) asparagine). A disordered region spans residues 169 to 200 (MEPSPMDTVEVTTSSSPEKTQTMATKDPQCEE). The O-linked (GalNAc...) serine glycan is linked to S172. Polar residues predominate over residues 178–192 (EVTTSSSPEKTQTMA). Residues 194-234 (KDPQCEEEDLKNQRKAALEYCGETWGSLCNFFLSMVQGSSC) are sufficient for interaction with FGF2 and FGF2-induced effects. 2 cysteine pairs are disulfide-bonded: C198-C234 and C214-C222.

It belongs to the fibroblast growth factor-binding protein family. In terms of assembly, found in a complex with FGFBP1, FGF1 and FGF2. Interacts with FGF1, FGF7, FGF10, FGF22 and HSPG2. Interacts with FGF2.

It is found in the secreted. It localises to the extracellular space. Its subcellular location is the cell membrane. Functionally, acts as a carrier protein that release fibroblast-binding factors (FGFs) from the extracellular matrix (EM) storage and thus enhance the mitogenic activity of FGFs. Enhances FGF2 signaling during tissue repair, angiogenesis and in tumor growth. In Bos taurus (Bovine), this protein is Fibroblast growth factor-binding protein 1 (FGFBP1).